The chain runs to 208 residues: Vacuolar ATPase assembly protein VMA12 (208 aa).

The residue at position 2 (A2) is an N-acetylalanine. Helical transmembrane passes span 146–166 (LVITIFNFIVTVVAAFVCTYL) and 179–199 (VLAALIVASVVGLAELYVMVR).

As to quaternary structure, accessory component of the multisubunit proton-transporting vacuolar (V)-ATPase protein pump.

The protein localises to the cytoplasmic vesicle. It localises to the COPI-coated vesicle membrane. Its subcellular location is the endoplasmic reticulum-Golgi intermediate compartment membrane. The protein resides in the endoplasmic reticulum membrane. In terms of biological role, accessory component of the proton-transporting vacuolar (V)-ATPase protein pump involved in intracellular iron homeostasis. In aerobic conditions, required for intracellular iron homeostasis, thus triggering the activity of Fe(2+) prolyl hydroxylase (PHD) enzymes, and leading to HIF1A hydroxylation and subsequent proteasomal degradation. Necessary for endolysosomal acidification and lysosomal degradation. May be involved in Golgi homeostasis. Binds 20(S)-hydroxycholesterol (20(S)-OHC). The sequence is that of Vacuolar ATPase assembly protein VMA12 from Homo sapiens (Human).